Reading from the N-terminus, the 37-residue chain is Photosystem II reaction center protein Y (37 aa).

Residues 4–22 (AIVVFAPIIAAVAWVVFNI) traverse the membrane as a helical segment.

It belongs to the PsbY family. In terms of assembly, PSII is composed of 1 copy each of membrane proteins PsbA, PsbB, PsbC, PsbD, PsbE, PsbF, PsbH, PsbI, PsbJ, PsbK, PsbL, PsbM, PsbT, PsbX, PsbY, Psb30/Ycf12, peripheral proteins PsbO, CyanoQ (PsbQ), PsbU, PsbV and a large number of cofactors. It forms dimeric complexes.

It localises to the cellular thylakoid membrane. Loosely associated component of the core of photosystem II (PSII), it is not always seen in crystals. PSII is a light-driven water plastoquinone oxidoreductase, using light energy to abstract electrons from H(2)O, generating a proton gradient subsequently used for ATP formation. The polypeptide is Photosystem II reaction center protein Y (Prochlorococcus marinus (strain MIT 9312)).